Here is a 133-residue protein sequence, read N- to C-terminus: Hydrogenase maturation factor HypA (133 aa).

Residue H2 participates in Ni(2+) binding. Zn(2+)-binding residues include C73, C75, C105, and C108.

This sequence belongs to the HypA/HybF family.

Involved in the maturation of [NiFe] hydrogenases. Required for nickel insertion into the metal center of the hydrogenase. This Methanosarcina barkeri (strain Fusaro / DSM 804) protein is Hydrogenase maturation factor HypA.